Consider the following 334-residue polypeptide: Glycerol-3-phosphate dehydrogenase [NAD(P)+] (334 aa).

NADPH-binding residues include Ser-14, Tyr-15, His-35, and Lys-109. Sn-glycerol 3-phosphate-binding residues include Lys-109, Gly-138, and Thr-140. Ala-142 is an NADPH binding site. Sn-glycerol 3-phosphate contacts are provided by Lys-194, Asp-247, Ser-257, Arg-258, and Asn-259. Residue Lys-194 is the Proton acceptor of the active site. Residue Arg-258 coordinates NADPH. The NADPH site is built by Val-282 and Glu-284.

The protein belongs to the NAD-dependent glycerol-3-phosphate dehydrogenase family.

It localises to the cytoplasm. The catalysed reaction is sn-glycerol 3-phosphate + NAD(+) = dihydroxyacetone phosphate + NADH + H(+). It carries out the reaction sn-glycerol 3-phosphate + NADP(+) = dihydroxyacetone phosphate + NADPH + H(+). It functions in the pathway membrane lipid metabolism; glycerophospholipid metabolism. Catalyzes the reduction of the glycolytic intermediate dihydroxyacetone phosphate (DHAP) to sn-glycerol 3-phosphate (G3P), the key precursor for phospholipid synthesis. The chain is Glycerol-3-phosphate dehydrogenase [NAD(P)+] from Aeromonas hydrophila subsp. hydrophila (strain ATCC 7966 / DSM 30187 / BCRC 13018 / CCUG 14551 / JCM 1027 / KCTC 2358 / NCIMB 9240 / NCTC 8049).